Reading from the N-terminus, the 508-residue chain is Cytochrome P450 4A12 (508 aa).

Helical transmembrane passes span 10-30 (IFPG…VLLL) and 120-140 (FLAP…WFQH). Glu319 contributes to the heme binding site. A Phosphoserine modification is found at Ser438. Cys455 provides a ligand contact to heme.

The protein belongs to the cytochrome P450 family. Heme is required as a cofactor. In terms of tissue distribution, expressed at proximal straight tubules and preglomerular arteries of the outer medulla as well in the cortex regions of kidney (at protein level).

The protein localises to the endoplasmic reticulum membrane. The protein resides in the microsome membrane. It catalyses the reaction an organic molecule + reduced [NADPH--hemoprotein reductase] + O2 = an alcohol + oxidized [NADPH--hemoprotein reductase] + H2O + H(+). The catalysed reaction is dodecanoate + reduced [NADPH--hemoprotein reductase] + O2 = 12-hydroxydodecanoate + oxidized [NADPH--hemoprotein reductase] + H2O + H(+). It carries out the reaction dodecanoate + reduced [NADPH--hemoprotein reductase] + O2 = (11R)-hydroxydodecanoate + oxidized [NADPH--hemoprotein reductase] + H2O + H(+). The enzyme catalyses (5Z,8Z,11Z,14Z)-eicosatetraenoate + reduced [NADPH--hemoprotein reductase] + O2 = 20-hydroxy-(5Z,8Z,11Z,14Z)-eicosatetraenoate + oxidized [NADPH--hemoprotein reductase] + H2O + H(+). It catalyses the reaction prostaglandin A1 + reduced [NADPH--hemoprotein reductase] + O2 = 20-hydroxy prostaglandin A1 + oxidized [NADPH--hemoprotein reductase] + H2O + H(+). The protein operates within lipid metabolism; fatty acid metabolism. Its activity is regulated as follows. Activated by cytochrome b5 and phosphatidylserine. Functionally, a cytochrome P450 monooxygenase involved in the metabolism of fatty acids. Catalyzes predominantly the oxidation of the terminal carbon (omega-oxidation) of saturated and unsaturated fatty acids. May act as a major omega-hydroxylase for dodecanoic (lauric) acid in kidney. At preglomerular arteries, may participate in omega-hydroxylation of (5Z,8Z,11Z,14Z)-eicosatetraenoic acid (arachidonate) to 20-hydroxyeicosatetraenoic acid (20-HETE), a signaling molecule acting both as vasoconstrictive and natriuretic with overall effect on arterial blood pressure. Can also catalyze the oxidation of the penultimate carbon (omega-1 oxidation) of fatty acids with lower efficiency, displaying a preference for the (R)-stereoisomer. Mechanistically, uses molecular oxygen inserting one oxygen atom into a substrate, and reducing the second into a water molecule, with two electrons provided by NADPH via cytochrome P450 reductase (NADPH--hemoprotein reductase). In Rattus norvegicus (Rat), this protein is Cytochrome P450 4A12 (Cyp4a12).